The chain runs to 419 residues: MKSATEQDSESDFYTAAAHLINCPGIETEQTLIEFLQYRESSCQSIKITKRKIVEVLARLGCIDAVPAIGKCLWSDDVYLVENSVWALQILQCQDQIFIDQMIDILRVDTTNQRISIQCLATLNISRSVDVIRPFQESSVPGIKGAAISGIAKLTRNFTRVPEISLNLLLPNQMDRHFAIQDLIDVDAIDQLNEIFAAPVSPVLKMRAVREMYGENSASVVDLNLLSSLDSLFSCDLSAINCVHEYDESPSSEFLVRDLYNTDFSRCYLALKYLSSRSASEIFPMLKESWVEEAHNDYGAHYCFICLFGSIFDWSAESKRWIFEVLLSSISNLRPQFQKSRAASILALAKLNPSMLCELIPEILSSRDSMPWDMRYSLIQSIDNYAELEIALKNKMIFQLSDNDIDQFVQARARMALAS.

Its function is as follows. Involved in the biosynthesis of bilin. This chain is Bilin biosynthesis protein CpeY (cpeY), found in Synechococcus sp. (strain WH8020).